A 735-amino-acid chain; its full sequence is Phosphoribosylformylglycinamidine synthase subunit PurL (735 aa).

Residue His49 is part of the active site. ATP is bound by residues Tyr52 and Lys91. Residue Glu93 participates in Mg(2+) binding. Residues 94 to 97 and Arg116 each bind substrate; that span reads SHNH. The Proton acceptor role is filled by His95. Asp117 contacts Mg(2+). Gln240 contributes to the substrate binding site. Mg(2+) is bound at residue Asp268. Residue 312-314 coordinates substrate; the sequence is ESQ. 2 residues coordinate ATP: Asp493 and Gly530. Residue Asn531 coordinates Mg(2+). A substrate-binding site is contributed by Ser533.

This sequence belongs to the FGAMS family. Monomer. Part of the FGAM synthase complex composed of 1 PurL, 1 PurQ and 2 PurS subunits.

It is found in the cytoplasm. It catalyses the reaction N(2)-formyl-N(1)-(5-phospho-beta-D-ribosyl)glycinamide + L-glutamine + ATP + H2O = 2-formamido-N(1)-(5-O-phospho-beta-D-ribosyl)acetamidine + L-glutamate + ADP + phosphate + H(+). It functions in the pathway purine metabolism; IMP biosynthesis via de novo pathway; 5-amino-1-(5-phospho-D-ribosyl)imidazole from N(2)-formyl-N(1)-(5-phospho-D-ribosyl)glycinamide: step 1/2. Its function is as follows. Part of the phosphoribosylformylglycinamidine synthase complex involved in the purines biosynthetic pathway. Catalyzes the ATP-dependent conversion of formylglycinamide ribonucleotide (FGAR) and glutamine to yield formylglycinamidine ribonucleotide (FGAM) and glutamate. The FGAM synthase complex is composed of three subunits. PurQ produces an ammonia molecule by converting glutamine to glutamate. PurL transfers the ammonia molecule to FGAR to form FGAM in an ATP-dependent manner. PurS interacts with PurQ and PurL and is thought to assist in the transfer of the ammonia molecule from PurQ to PurL. The chain is Phosphoribosylformylglycinamidine synthase subunit PurL from Methylocella silvestris (strain DSM 15510 / CIP 108128 / LMG 27833 / NCIMB 13906 / BL2).